Reading from the N-terminus, the 207-residue chain is 8-oxoguanine DNA glycosylase/AP lyase (207 aa).

Residues K129 and D147 contribute to the active site.

It belongs to the type-2 OGG1 family.

It catalyses the reaction 2'-deoxyribonucleotide-(2'-deoxyribose 5'-phosphate)-2'-deoxyribonucleotide-DNA = a 3'-end 2'-deoxyribonucleotide-(2,3-dehydro-2,3-deoxyribose 5'-phosphate)-DNA + a 5'-end 5'-phospho-2'-deoxyribonucleoside-DNA + H(+). In terms of biological role, catalyzes the excision of an oxidatively damaged form of guanine (7,8-dihydro-8-oxoguanine = 8-oxoG) from DNA. Also cleaves the DNA backbone at apurinic/apyrimidinic sites (AP sites). The sequence is that of 8-oxoguanine DNA glycosylase/AP lyase from Thermotoga maritima (strain ATCC 43589 / DSM 3109 / JCM 10099 / NBRC 100826 / MSB8).